The following is a 1495-amino-acid chain: ABC transporter C family member 12 (1495 aa).

Transmembrane regions (helical) follow at residues 38–58 (VMLV…WIIF), 76–96 (VLGL…VMGI), 110–130 (FEVA…VLIG), 146–166 (FGVL…LPLK), 173–195 (ALYL…LIYI), 303–323 (FWLA…GPVI), 337–357 (AWVG…GVLC), 420–440 (GLWS…QQLG), 441–461 (VASL…TLII), 528–548 (FILN…FVLL), and 558–578 (FTSL…PNLL). The ABC transmembrane type-1 1 domain occupies 303–583 (FWLAGIFKIG…LPNLLSQVVN (281 aa)). One can recognise an ABC transporter 1 domain in the interval 615-839 (ISIKNGYFSW…GILFKKLMEN (225 aa)). ATP is bound at residue 650–657 (GGTGEGKT). The next 5 membrane-spanning stretches (helical) occupy residues 907–927 (AVGG…TEVL), 949–969 (PGFY…VTFT), 1042–1062 (FALI…LLIL), 1140–1160 (LETL…LQNG), and 1166–1186 (AGFA…TSLL). Positions 914–1198 (VMILLACYLA…VLRQASRAEN (285 aa)) constitute an ABC transmembrane type-1 2 domain. Positions 1235–1469 (IKFEDVHLRY…DTSAFFRMVH (235 aa)) constitute an ABC transporter 2 domain. 1269–1276 (GRTGAGKS) is an ATP binding site.

This sequence belongs to the ABC transporter superfamily. ABCC family. Conjugate transporter (TC 3.A.1.208) subfamily. Ubiquitous.

It is found in the membrane. It carries out the reaction ATP + H2O + xenobioticSide 1 = ADP + phosphate + xenobioticSide 2.. Pump for glutathione S-conjugates. The protein is ABC transporter C family member 12 (ABCC12) of Arabidopsis thaliana (Mouse-ear cress).